The primary structure comprises 1174 residues: ATP-dependent DNA helicase SRS2 (1174 aa).

A UvrD-like helicase ATP-binding domain is found at 14–316 (QLNTQQRAAA…IILVENYRSS (303 aa)). 38-43 (GTGKTK) lines the ATP pocket. The segment at 222–243 (LLMYTFRLLTRVRVLSNIKHVL) is leucine-zipper. Arg-314 contacts ATP. Positions 317 to 654 (QKILNTSEIL…TISTIHGAKG (338 aa)) constitute a UvrD-like helicase C-terminal domain. The interval 676–704 (DDKKDESEEDEEEDQENSKKDASPKKTRV) is disordered. Phosphoserine is present on Ser-833. Disordered regions lie at residues 865 to 896 (SKINGNYAPKSRVKSPEKRYAPETTSFHSPTK), 909 to 973 (NVPS…DKVT), and 994 to 1024 (ELHPPEYSNKSGQSLTSSEFSGFSSACSNSD). Polar residues-rich tracts occupy residues 909 to 922 (NVPSRQEFHSSTGK) and 935 to 955 (TDISPRSSTRSLKGASPNKTS). A compositionally biased stretch (basic and acidic residues) spans 956–973 (HMSDDLMRPSPTRKDKVT). The span at 1007 to 1023 (SLTSSEFSGFSSACSNS) shows a compositional bias: low complexity.

This sequence belongs to the helicase family. UvrD subfamily.

It is found in the nucleus. It catalyses the reaction Couples ATP hydrolysis with the unwinding of duplex DNA by translocating in the 3'-5' direction.. It carries out the reaction ATP + H2O = ADP + phosphate + H(+). Functionally, ATP-dependent DNA helicase involved in DNA repair at least for UV-induced lesions. The polarity of the helicase activity was determined to be 3' to 5'. In Saccharomyces cerevisiae (strain ATCC 204508 / S288c) (Baker's yeast), this protein is ATP-dependent DNA helicase SRS2 (SRS2).